A 346-amino-acid polypeptide reads, in one-letter code: MRKTSKMINQIYQLTKPKFINVKYQEEAIDQENHILIRPNYMAVCHADQRYYQGKRDPKILNKKLPMAMIHESCGTVISDPTGTYEVGQKVVMIPNQSPMQSDEEFYENYMTGTHFLSSGFDGFMREFVSLPKDRVVAYDAIEDTVAAITEFVSVGMHAMNRLLTLAHSKRERIAVIGDGSLAFVVANIINYTLPEAEIVVIGRHWEKLELFSFAKECYITDNIPEDLAFDHAFECCGGDGTGPAINDLIRYIRPQGTILMMGVSEYKVNLNTRDALEKGLILVGSSRSGRIDFENAIQMMEVKKFANRLKNILYLEEPVREIKDIHRVFATDLNTAFKTVFKWEV.

Zn(2+)-binding residues include Cys45, His71, Glu72, and Glu151.

The protein belongs to the zinc-containing alcohol dehydrogenase family. It depends on Zn(2+) as a cofactor.

The catalysed reaction is D-ribitol 5-phosphate + NADP(+) = D-ribulose 5-phosphate + NADPH + H(+). The protein operates within cell wall biogenesis; poly(ribitol phosphate) teichoic acid biosynthesis. Functionally, catalyzes the NADPH dependent reduction of D-ribulose 5-phosphate to D-ribitol 5-phosphate. The chain is Ribulose-5-phosphate reductase from Streptococcus pneumoniae (strain ATCC BAA-255 / R6).